Consider the following 641-residue polypeptide: Fructose-1,6-bisphosphatase class 3 (641 aa).

Belongs to the FBPase class 3 family. It depends on Mn(2+) as a cofactor.

The enzyme catalyses beta-D-fructose 1,6-bisphosphate + H2O = beta-D-fructose 6-phosphate + phosphate. The protein operates within carbohydrate biosynthesis; gluconeogenesis. This chain is Fructose-1,6-bisphosphatase class 3, found in Bacillus velezensis (strain DSM 23117 / BGSC 10A6 / LMG 26770 / FZB42) (Bacillus amyloliquefaciens subsp. plantarum).